A 174-amino-acid chain; its full sequence is Phosphopantetheine adenylyltransferase (174 aa).

Thr-10 provides a ligand contact to substrate. Residues 10–11 (TF) and His-18 each bind ATP. Positions 44, 76, and 90 each coordinate substrate. Residues 91–93 (GLR), Glu-101, and 126–132 (HAYISSS) contribute to the ATP site.

The protein belongs to the bacterial CoaD family. Homohexamer. Requires Mg(2+) as cofactor.

The protein localises to the cytoplasm. The catalysed reaction is (R)-4'-phosphopantetheine + ATP + H(+) = 3'-dephospho-CoA + diphosphate. It functions in the pathway cofactor biosynthesis; coenzyme A biosynthesis; CoA from (R)-pantothenate: step 4/5. Functionally, reversibly transfers an adenylyl group from ATP to 4'-phosphopantetheine, yielding dephospho-CoA (dPCoA) and pyrophosphate. The chain is Phosphopantetheine adenylyltransferase from Alkalilimnicola ehrlichii (strain ATCC BAA-1101 / DSM 17681 / MLHE-1).